The sequence spans 379 residues: Pentatricopeptide repeat-containing protein At3g25210, mitochondrial (379 aa).

6 PPR repeats span residues 142–177 (SVPLYNCIIRFCCGRKFLFNRAFDVYNKMLRSDDSK), 179–221 (DLET…GVIP), 222–256 (DTFVLNMIIKAYAKCLEVDEAIRVFKEMALYGSEP), 257–291 (NAYTYSYLVKGVCEKGRVGQGLGFYKEMQVKGMVP), 292–326 (NGSCYMVLICSLSMERRLDEAVEVVYDMLANSLSP), and 327–361 (DMLTYNTVLTELCRGGRGSEALEMVEEWKKRDPVM).

Belongs to the PPR family. P subfamily.

The protein localises to the mitochondrion. This Arabidopsis thaliana (Mouse-ear cress) protein is Pentatricopeptide repeat-containing protein At3g25210, mitochondrial.